A 556-amino-acid polypeptide reads, in one-letter code: Potassium-transporting ATPase potassium-binding subunit (556 aa).

The next 12 membrane-spanning stretches (helical) occupy residues 3-23 (AHGV…TPIL), 57-77 (AAYA…LYAL), 129-149 (GLTV…VALM), 172-192 (LGLL…QGVP), 247-267 (LVNL…TNTF), 278-298 (WALL…AWWA), 319-339 (LGVA…CGAV), 346-366 (LLPL…VVVG), 371-391 (GLYG…LMVG), 408-428 (LAVI…GLAI), 486-506 (FVVM…MAVP), and 516-536 (GWLF…LTYF).

Belongs to the KdpA family. The system is composed of three essential subunits: KdpA, KdpB and KdpC.

It localises to the cell inner membrane. Part of the high-affinity ATP-driven potassium transport (or Kdp) system, which catalyzes the hydrolysis of ATP coupled with the electrogenic transport of potassium into the cytoplasm. This subunit binds the periplasmic potassium ions and delivers the ions to the membrane domain of KdpB through an intramembrane tunnel. The protein is Potassium-transporting ATPase potassium-binding subunit of Paramagnetospirillum magneticum (strain ATCC 700264 / AMB-1) (Magnetospirillum magneticum).